Reading from the N-terminus, the 289-residue chain is uncharacterized protein (289 aa).

Residues 1 to 23 (MIKNYKLLLFTTFTLFFITFVSG) form the signal peptide. N-linked (GlcNAc...) asparagine glycans are attached at residues Asn-74, Asn-101, Asn-132, and Asn-285.

The protein localises to the secreted. This is an uncharacterized protein from Dictyostelium discoideum (Social amoeba).